A 101-amino-acid polypeptide reads, in one-letter code: Small ribosomal subunit protein uS14 (101 aa).

It belongs to the universal ribosomal protein uS14 family. Part of the 30S ribosomal subunit. Contacts proteins S3 and S10.

In terms of biological role, binds 16S rRNA, required for the assembly of 30S particles and may also be responsible for determining the conformation of the 16S rRNA at the A site. The sequence is that of Small ribosomal subunit protein uS14 from Synechococcus sp. (strain JA-2-3B'a(2-13)) (Cyanobacteria bacterium Yellowstone B-Prime).